The primary structure comprises 176 residues: Ribosome maturation factor RimM (176 aa).

Residues 97 to 176 (EDEFYWRDLI…QIIVDWDPDF (80 aa)) enclose the PRC barrel domain.

It belongs to the RimM family. Binds ribosomal protein uS19.

It is found in the cytoplasm. In terms of biological role, an accessory protein needed during the final step in the assembly of 30S ribosomal subunit, possibly for assembly of the head region. Essential for efficient processing of 16S rRNA. May be needed both before and after RbfA during the maturation of 16S rRNA. It has affinity for free ribosomal 30S subunits but not for 70S ribosomes. The protein is Ribosome maturation factor RimM of Shewanella amazonensis (strain ATCC BAA-1098 / SB2B).